A 350-amino-acid chain; its full sequence is C5a anaphylatoxin chemotactic receptor 1 (350 aa).

The Extracellular segment spans residues 1-36 (APMENSTYDYTNYDSLGTLDPSTPVDNTVRRLRPTT). Asn5 carries an N-linked (GlcNAc...) asparagine glycan. Sulfotyrosine is present on residues Tyr10 and Tyr13. Residues 37–63 (IVALVIYMAVFLVGVPGNALVVWVTAL) traverse the membrane as a helical segment. Topologically, residues 64–68 (EAKRT) are cytoplasmic. Residues 69-92 (VNAIWFLNLAVADLLSCLALPILF) form a helical membrane-spanning segment. The Extracellular portion of the chain corresponds to 93 to 109 (VSIIQEGHWPFGRAACS). A disulfide bridge connects residues Cys108 and Cys187. Residues 110-131 (VLPSLILLNMYASILLLATISA) form a helical membrane-spanning segment. The Cytoplasmic portion of the chain corresponds to 132–152 (DRFLLVFNPIWCQNTRGAGLA). A helical membrane pass occupies residues 153–173 (WLACCVAWGLALLLTIPSFLY). The Extracellular segment spans residues 174–200 (RKVLQDDYPPKTTCGVDYGHEGVRAER). A helical transmembrane segment spans residues 201–226 (AVAIVRLVVGFLLPLFTLSVCYTFLL). The Cytoplasmic portion of the chain corresponds to 227–242 (LRTWSRNGTRSTKTLK). Residues 243–265 (VVVAVVVSFFIFWLPYQVMGMIL) form a helical membrane-spanning segment. Over 266–282 (ALLHPSSATFRWAIRLD) the chain is Extracellular. A helical membrane pass occupies residues 283–303 (PLCIALAYVNCCINPIIYVVA). Over 304 to 350 (GKGFQGQLRKSLPSLLRNVLAEESVIQGSKSFSRSTVDTVADKCQAV) the chain is Cytoplasmic. Phosphoserine occurs at positions 314, 317, 327, 332, 334, and 338.

It belongs to the G-protein coupled receptor 1 family. As to quaternary structure, homodimer. May also form higher-order oligomers. Interacts (when phosphorylated) with ARRB1 and ARRB2; the interaction is associated with internalization of C5aR. In terms of processing, sulfation plays a critical role in the association of C5aR with C5a, but no significant role in the ability of the receptor to transduce a signal and mobilize calcium in response to a small peptide agonist. Phosphorylated on serine residues in response to C5a binding, resulting in internalization of the receptor and short-term desensitization to C5a.

Its subcellular location is the cell membrane. It is found in the cytoplasmic vesicle. In terms of biological role, receptor for the chemotactic and inflammatory peptide anaphylatoxin C5a. The ligand interacts with at least two sites on the receptor: a high-affinity site on the extracellular N-terminus, and a second site in the transmembrane region which activates downstream signaling events. Receptor activation stimulates chemotaxis, granule enzyme release, intracellular calcium release and superoxide anion production. The chain is C5a anaphylatoxin chemotactic receptor 1 (C5AR1) from Oryctolagus cuniculus (Rabbit).